Here is a 254-residue protein sequence, read N- to C-terminus: Triosephosphate isomerase (254 aa).

Residue 9–11 (NWK) coordinates substrate. Residue His-96 is the Electrophile of the active site. The active-site Proton acceptor is the Glu-169. Substrate-binding positions include Gly-175, Ser-215, and 236 to 237 (GG).

The protein belongs to the triosephosphate isomerase family. As to quaternary structure, homodimer.

It localises to the cytoplasm. It carries out the reaction D-glyceraldehyde 3-phosphate = dihydroxyacetone phosphate. The protein operates within carbohydrate biosynthesis; gluconeogenesis. It functions in the pathway carbohydrate degradation; glycolysis; D-glyceraldehyde 3-phosphate from glycerone phosphate: step 1/1. Involved in the gluconeogenesis. Catalyzes stereospecifically the conversion of dihydroxyacetone phosphate (DHAP) to D-glyceraldehyde-3-phosphate (G3P). This Borrelia duttonii (strain Ly) protein is Triosephosphate isomerase.